Here is a 111-residue protein sequence, read N- to C-terminus: Iron-sulfur cluster insertion protein ErpA (111 aa).

Iron-sulfur cluster contacts are provided by cysteine 39, cysteine 103, and cysteine 105.

The protein belongs to the HesB/IscA family. In terms of assembly, homodimer. It depends on iron-sulfur cluster as a cofactor.

In terms of biological role, required for insertion of 4Fe-4S clusters for at least IspG. The polypeptide is Iron-sulfur cluster insertion protein ErpA (Buchnera aphidicola subsp. Cinara cedri (strain Cc)).